A 445-amino-acid chain; its full sequence is Sporulation-specific glucan 1,3-beta-glucosidase (445 aa).

The first 21 residues, 1-21 (MVSFRGLTTLTLLFTKLVNCN), serve as a signal peptide directing secretion. Asn201 carries an N-linked (GlcNAc...) asparagine glycan. Residue Glu233 is the Proton donor of the active site. Catalysis depends on Glu335, which acts as the Nucleophile.

It belongs to the glycosyl hydrolase 5 (cellulase A) family.

The protein resides in the secreted. It catalyses the reaction Successive hydrolysis of beta-D-glucose units from the non-reducing ends of (1-&gt;3)-beta-D-glucans, releasing alpha-glucose.. Its function is as follows. Probably involved in the processes of spore formation and contributes to ascospore thermoresistance by participating in the morphogenesis of ascospore walls. The enzyme may do this by modifying glucan linkages in the developing ascospore wall, thus strengthening it or lending it plasticity. This chain is Sporulation-specific glucan 1,3-beta-glucosidase (SPR1), found in Saccharomyces cerevisiae (strain ATCC 204508 / S288c) (Baker's yeast).